The following is a 317-amino-acid chain: Melanocyte-stimulating hormone receptor (317 aa).

The Extracellular segment spans residues 1 to 37 (MPMQGAQRRLLGSLNSTPTATPNLGLAANHTGAPCLE). The N-linked (GlcNAc...) asparagine glycan is linked to Asn-29. A helical transmembrane segment spans residues 38-63 (VSIPHGLFLSLGLVSLVENVLVVAAI). Topologically, residues 64–72 (AKNRNLHSP) are cytoplasmic. A helical membrane pass occupies residues 73–93 (MYCFICCLALSDLLVSGSNML). The Extracellular portion of the chain corresponds to 94-118 (ETAVILLLEAGALATRASVVQQLQN). A helical membrane pass occupies residues 119 to 140 (TIDVLTCSSMLCSLCFLGAIAV). Over 141–163 (DRYVSIFYALRYHSIVTLPRARR) the chain is Cytoplasmic. Residues 164-183 (AIAAIWVASVLSSTLFIAYC) form a helical membrane-spanning segment. Over 184–191 (DHAAVLLC) the chain is Extracellular. A helical membrane pass occupies residues 192–211 (LVVFFLAMLVLMAVLYVHML). Residues 212-240 (ARACQHAQGITRLHKRQLPAHQGFGLRGA) are Cytoplasmic-facing. The chain crosses the membrane as a helical span at residues 241–266 (ATLTILLGIFFLCWGPFFLHLMLVVL). At 267–279 (CPQHLTCSCIFKN) the chain is on the extracellular side. Residues 280 to 300 (FKVFLTLIICNTIIDPLIYAF) traverse the membrane as a helical segment. At 301–317 (RSQELCRTLKEVLLCSW) the chain is on the cytoplasmic side. Cys-315 carries S-palmitoyl cysteine lipidation.

Belongs to the G-protein coupled receptor 1 family. As to quaternary structure, interacts with MGRN1, but does not undergo MGRN1-mediated ubiquitination; this interaction competes with GNAS-binding and thus inhibits agonist-induced cAMP production. Interacts with OPN3; the interaction results in a decrease in MC1R-mediated cAMP signaling and ultimately a decrease in melanin production in melanocytes.

Its subcellular location is the cell membrane. Receptor for MSH (alpha, beta and gamma) and ACTH. The activity of this receptor is mediated by G proteins which activate adenylate cyclase. Mediates melanogenesis, the production of eumelanin (black/brown) and phaeomelanin (red/yellow), via regulation of cAMP signaling in melanocytes. The chain is Melanocyte-stimulating hormone receptor (MC1R) from Alouatta caraya (Black howler monkey).